A 91-amino-acid polypeptide reads, in one-letter code: KAVSEKEVDSGNDIYGNPIKRIQYEIKQIKMFKGPDKDIEFIYTAPSSAVCGVSLDVGGKKEYLIAGKADGNGKMHITLCDFIVPWDTLST.

The 91-residue stretch at 1-91 (KAVSEKEVDS…FIVPWDTLST (91 aa)) folds into the NTR domain.

The protein belongs to the protease inhibitor I35 (TIMP) family. Post-translationally, the activity of TIMP2 is dependent on the presence of disulfide bonds.

It localises to the secreted. Its function is as follows. Complexes with metalloproteinases (such as collagenases) and irreversibly inactivates them. The chain is Metalloproteinase inhibitor 2 (TIMP2) from Equus caballus (Horse).